The sequence spans 91 residues: Small ribosomal subunit protein uS19 (91 aa).

The protein belongs to the universal ribosomal protein uS19 family.

In terms of biological role, protein S19 forms a complex with S13 that binds strongly to the 16S ribosomal RNA. This is Small ribosomal subunit protein uS19 from Aromatoleum aromaticum (strain DSM 19018 / LMG 30748 / EbN1) (Azoarcus sp. (strain EbN1)).